Here is a 396-residue protein sequence, read N- to C-terminus: 1-deoxy-D-xylulose 5-phosphate reductoisomerase (396 aa).

6 residues coordinate NADPH: Thr14, Gly15, Ser16, Ile17, Gly40, and Asn128. Residue Lys129 coordinates 1-deoxy-D-xylulose 5-phosphate. Glu130 serves as a coordination point for NADPH. Residue Asp154 coordinates Mn(2+). Residues Ser155, Glu156, Ser180, and His203 each coordinate 1-deoxy-D-xylulose 5-phosphate. Glu156 is a binding site for Mn(2+). Residue Gly209 participates in NADPH binding. Positions 216, 221, 222, and 225 each coordinate 1-deoxy-D-xylulose 5-phosphate. Glu225 is a Mn(2+) binding site.

This sequence belongs to the DXR family. Mg(2+) serves as cofactor. Requires Mn(2+) as cofactor.

The enzyme catalyses 2-C-methyl-D-erythritol 4-phosphate + NADP(+) = 1-deoxy-D-xylulose 5-phosphate + NADPH + H(+). It participates in isoprenoid biosynthesis; isopentenyl diphosphate biosynthesis via DXP pathway; isopentenyl diphosphate from 1-deoxy-D-xylulose 5-phosphate: step 1/6. Its function is as follows. Catalyzes the NADPH-dependent rearrangement and reduction of 1-deoxy-D-xylulose-5-phosphate (DXP) to 2-C-methyl-D-erythritol 4-phosphate (MEP). The sequence is that of 1-deoxy-D-xylulose 5-phosphate reductoisomerase from Xylella fastidiosa (strain 9a5c).